Here is a 129-residue protein sequence, read N- to C-terminus: DNA-directed RNA polymerase subunit omega (129 aa).

Residues 76–101 (EVDEPEPDPVTLAASAADGEDDDQPE) are disordered.

This sequence belongs to the RNA polymerase subunit omega family. As to quaternary structure, the RNAP catalytic core consists of 2 alpha, 1 beta, 1 beta' and 1 omega subunit. When a sigma factor is associated with the core the holoenzyme is formed, which can initiate transcription.

The enzyme catalyses RNA(n) + a ribonucleoside 5'-triphosphate = RNA(n+1) + diphosphate. Functionally, promotes RNA polymerase assembly. Latches the N- and C-terminal regions of the beta' subunit thereby facilitating its interaction with the beta and alpha subunits. The polypeptide is DNA-directed RNA polymerase subunit omega (Agrobacterium fabrum (strain C58 / ATCC 33970) (Agrobacterium tumefaciens (strain C58))).